The sequence spans 479 residues: mRNA export factor ICP27 homolog (479 aa).

The segment covering Met-1–Ser-15 has biased composition (low complexity). Disordered regions lie at residues Met-1–Val-78 and Lys-92–Trp-210. The segment covering Thr-35 to Gly-44 has biased composition (acidic residues). The span at Glu-132 to Gly-142 shows a compositional bias: basic and acidic residues. Zn(2+)-binding residues include Cys-354, His-445, Cys-449, and Cys-454. The CHC2-type zinc-finger motif lies at Cys-354–Cys-454.

Belongs to the HHV-1 ICP27 protein family. Interacts with host XPO1 and with the XPO1 export pathway components small GTPase RAN and nucleoporin NUP214. Interacts with host SPEN, OTT1 and OTT3. Interacts with host SRSF1, SRSF3, SRSF7 and SRPK1. Interacts with host DHX9; this interaction may have an inhibitory effect on virion production. Interacts (via N-terminus) with host NXF1; this interaction plays a role in mRNA export. In terms of processing, phosphorylated by cellular protein kinase CK2.

It is found in the host nucleus. Its subcellular location is the host cytoplasm. Promotes the nuclear export of a subset of early and late viral mRNAs by interacting with mRNAs and cellular export proteins. Additionally may prevent the establishment of cellular antiviral state, by acting as an alternative splicing factor for cellular RNAs such as STAT1, resulting in a STAT1 mRNA incapable of producing the STAT1alpha isoform. The chain is mRNA export factor ICP27 homolog from Homo sapiens (Human).